A 404-amino-acid chain; its full sequence is F-box protein At3g57590 (404 aa).

The 47-residue stretch at 1–47 folds into the F-box domain; sequence MEPIPNDLILEIFSRLPAKSVIGFRTLSKHWASILRSPVFTELFLTR.

The sequence is that of F-box protein At3g57590 from Arabidopsis thaliana (Mouse-ear cress).